We begin with the raw amino-acid sequence, 392 residues long: Succinate--CoA ligase [ADP-forming] subunit beta (392 aa).

One can recognise an ATP-grasp domain in the interval 9-247; it reads KAILRKYGVA…VTEEDPLEVE (239 aa). ATP-binding positions include Lys-49, 56-58, Glu-102, Leu-105, and Glu-110; that span reads GRG. Mg(2+)-binding residues include Asn-202 and Asp-216. Residues Asn-267 and 324–326 contribute to the substrate site; that span reads GIL.

The protein belongs to the succinate/malate CoA ligase beta subunit family. As to quaternary structure, heterotetramer of two alpha and two beta subunits. Requires Mg(2+) as cofactor.

The enzyme catalyses succinate + ATP + CoA = succinyl-CoA + ADP + phosphate. The catalysed reaction is GTP + succinate + CoA = succinyl-CoA + GDP + phosphate. It functions in the pathway carbohydrate metabolism; tricarboxylic acid cycle; succinate from succinyl-CoA (ligase route): step 1/1. Functionally, succinyl-CoA synthetase functions in the citric acid cycle (TCA), coupling the hydrolysis of succinyl-CoA to the synthesis of either ATP or GTP and thus represents the only step of substrate-level phosphorylation in the TCA. The beta subunit provides nucleotide specificity of the enzyme and binds the substrate succinate, while the binding sites for coenzyme A and phosphate are found in the alpha subunit. This is Succinate--CoA ligase [ADP-forming] subunit beta from Koribacter versatilis (strain Ellin345).